A 158-amino-acid chain; its full sequence is MPLLLTGQEFRRDLERDGALALFVPLEGGAETRLMRRLRAVGYKAYLTSAKGLGDPEAYLLKLHEQHVPHLGRRMSTEGKPEGKSVGHVPKVMPMLGPLLEGKSPILLWLLEGQVLSSSELSAISNLPKREPRLKIVVEMGGARALRWESLGKLVESR.

The protein belongs to the complex I NdhN subunit family. In terms of assembly, NDH-1 can be composed of about 15 different subunits; different subcomplexes with different compositions have been identified which probably have different functions.

It is found in the plastid. It localises to the organellar chromatophore thylakoid membrane. It carries out the reaction a plastoquinone + NADH + (n+1) H(+)(in) = a plastoquinol + NAD(+) + n H(+)(out). The enzyme catalyses a plastoquinone + NADPH + (n+1) H(+)(in) = a plastoquinol + NADP(+) + n H(+)(out). Its function is as follows. NDH-1 shuttles electrons from an unknown electron donor, via FMN and iron-sulfur (Fe-S) centers, to quinones in the respiratory and/or the photosynthetic chain. The immediate electron acceptor for the enzyme in this species is believed to be plastoquinone. Couples the redox reaction to proton translocation, and thus conserves the redox energy in a proton gradient. This chain is NAD(P)H-quinone oxidoreductase subunit N, organellar chromatophore, found in Paulinella chromatophora.